The following is a 374-amino-acid chain: MILCGDSVAGNSTGEMFRVTTFGSSHGPAVGAVIDGCPAGLELSEDDIQQELNRRRPGTGALTTPRAESDRVEILSGIFRGRTDGTPIAGIVRNLDADSKSYSNIKNTPRPGHGDYTWRARFRNYDYRGGGRGSGRVTIGHVIGGAVAKKLIGNYGLTVTGHVVQVGDVKADTVSLKRIGEYAESNPVRCADPRAARQMEKVILDARSRGDSVGGVVEVVVLGAPPGLGDPVFSKLDADMARALMGIGSVKGVEIGMGFEVAEHRASEINDEFYLDDDGKVRTTTNTSGGILGGISSGMPITARIAVKPTPSISVPQKTVDLERMEETTIEVRGRHDPCICPRVVPVAEAAVAIVLADHMIRAGFIHPTYIGNE.

R55 is a binding site for NADP(+). FMN is bound by residues 132 to 134, G293, 308 to 312, and R335; these read RGS and KPTPS.

Belongs to the chorismate synthase family. Requires FMNH2 as cofactor.

The enzyme catalyses 5-O-(1-carboxyvinyl)-3-phosphoshikimate = chorismate + phosphate. It functions in the pathway metabolic intermediate biosynthesis; chorismate biosynthesis; chorismate from D-erythrose 4-phosphate and phosphoenolpyruvate: step 7/7. Its function is as follows. Catalyzes the anti-1,4-elimination of the C-3 phosphate and the C-6 proR hydrogen from 5-enolpyruvylshikimate-3-phosphate (EPSP) to yield chorismate, which is the branch point compound that serves as the starting substrate for the three terminal pathways of aromatic amino acid biosynthesis. This reaction introduces a second double bond into the aromatic ring system. The chain is Chorismate synthase from Methanothermobacter thermautotrophicus (strain ATCC 29096 / DSM 1053 / JCM 10044 / NBRC 100330 / Delta H) (Methanobacterium thermoautotrophicum).